The following is a 161-amino-acid chain: MIVQINDYFIGMIFKGNRLVRNTIPLREEEIFRFYNGKILDEPNKMCMKVGKIILKLYFADLDDKIARDLIDYELNVSSFTKKVLDEVKKIKFGETVSYGDIAKKLNTSPRAVGVALSKNPLPLIIPCHRVVAKNSLGGYSYGIEKKKFILEMEQIKKRLK.

The active-site Nucleophile; methyl group acceptor is the Cys128.

Belongs to the MGMT family.

Its subcellular location is the cytoplasm. The catalysed reaction is a 6-O-methyl-2'-deoxyguanosine in DNA + L-cysteinyl-[protein] = S-methyl-L-cysteinyl-[protein] + a 2'-deoxyguanosine in DNA. It catalyses the reaction a 4-O-methyl-thymidine in DNA + L-cysteinyl-[protein] = a thymidine in DNA + S-methyl-L-cysteinyl-[protein]. Its function is as follows. Involved in the cellular defense against the biological effects of O6-methylguanine (O6-MeG) and O4-methylthymine (O4-MeT) in DNA. Repairs the methylated nucleobase in DNA by stoichiometrically transferring the methyl group to a cysteine residue in the enzyme. This is a suicide reaction: the enzyme is irreversibly inactivated. The sequence is that of Methylated-DNA--protein-cysteine methyltransferase from Methanocaldococcus vulcanius (strain ATCC 700851 / DSM 12094 / M7) (Methanococcus vulcanius).